The chain runs to 188 residues: Large ribosomal subunit protein uL5 (188 aa).

Belongs to the universal ribosomal protein uL5 family. As to quaternary structure, part of the 50S ribosomal subunit; contacts the 5S rRNA and probably tRNA. Forms a bridge to the 30S subunit in the 70S ribosome.

Its function is as follows. This is one of the proteins that bind and probably mediate the attachment of the 5S RNA into the large ribosomal subunit, where it forms part of the central protuberance. In the 70S ribosome it contacts protein S13 of the 30S subunit (bridge B1b), connecting the 2 subunits; this bridge is implicated in subunit movement. May contact the P site tRNA; the 5S rRNA and some of its associated proteins might help stabilize positioning of ribosome-bound tRNAs. In Pyrococcus horikoshii (strain ATCC 700860 / DSM 12428 / JCM 9974 / NBRC 100139 / OT-3), this protein is Large ribosomal subunit protein uL5.